The chain runs to 112 residues: Large ribosomal subunit protein uL22 (112 aa).

This sequence belongs to the universal ribosomal protein uL22 family. In terms of assembly, part of the 50S ribosomal subunit.

This protein binds specifically to 23S rRNA; its binding is stimulated by other ribosomal proteins, e.g. L4, L17, and L20. It is important during the early stages of 50S assembly. It makes multiple contacts with different domains of the 23S rRNA in the assembled 50S subunit and ribosome. Its function is as follows. The globular domain of the protein is located near the polypeptide exit tunnel on the outside of the subunit, while an extended beta-hairpin is found that lines the wall of the exit tunnel in the center of the 70S ribosome. In Desulfovibrio desulfuricans (strain ATCC 27774 / DSM 6949 / MB), this protein is Large ribosomal subunit protein uL22.